The sequence spans 486 residues: Ribosomal RNA small subunit methyltransferase F (486 aa).

S-adenosyl-L-methionine is bound by residues Ala-124 to Lys-130, Glu-148, Asp-175, and Asp-193. Cys-246 acts as the Nucleophile in catalysis.

This sequence belongs to the class I-like SAM-binding methyltransferase superfamily. RsmB/NOP family.

It is found in the cytoplasm. The catalysed reaction is cytidine(1407) in 16S rRNA + S-adenosyl-L-methionine = 5-methylcytidine(1407) in 16S rRNA + S-adenosyl-L-homocysteine + H(+). Its function is as follows. Specifically methylates the cytosine at position 1407 (m5C1407) of 16S rRNA. The protein is Ribosomal RNA small subunit methyltransferase F of Shewanella baltica (strain OS185).